An 82-amino-acid polypeptide reads, in one-letter code: U-actitoxin-Avd3h (82 aa).

The N-terminal stretch at 1–16 (MVFLLCFFLVADVSYG) is a signal peptide. The 51-residue stretch at 21-71 (CELPKVVGPCRARFPRYYYNSSSKRCEKFIYGGCRGNANNFHTLEECEKVC) folds into the BPTI/Kunitz inhibitor domain. Cystine bridges form between Cys21-Cys71, Cys30-Cys54, and Cys46-Cys67. A propeptide spanning residues 76-82 (RDSPKEN) is cleaved from the precursor.

Belongs to the venom Kunitz-type family. Sea anemone type 2 potassium channel toxin subfamily.

The protein localises to the secreted. It localises to the nematocyst. Functionally, dual-function toxin that inhibits both the serine protease trypsin (Kd=30 nM) and voltage-gated potassium channels Kv1.2/KCNA2 (IC(50)=2800 nM). In Anemonia viridis (Snakelocks anemone), this protein is U-actitoxin-Avd3h.